The primary structure comprises 540 residues: Chaperonin GroEL (540 aa).

ATP contacts are provided by residues 29-32, 86-90, glycine 413, 476-478, and aspartate 492; these read TLGP, DGTTT, and NAA.

It belongs to the chaperonin (HSP60) family. As to quaternary structure, forms a cylinder of 14 subunits composed of two heptameric rings stacked back-to-back. Interacts with the co-chaperonin GroES.

The protein localises to the cytoplasm. It catalyses the reaction ATP + H2O + a folded polypeptide = ADP + phosphate + an unfolded polypeptide.. In terms of biological role, together with its co-chaperonin GroES, plays an essential role in assisting protein folding. The GroEL-GroES system forms a nano-cage that allows encapsulation of the non-native substrate proteins and provides a physical environment optimized to promote and accelerate protein folding. This is Chaperonin GroEL from Tsukamurella paurometabola (Corynebacterium paurometabolum).